The following is a 154-amino-acid chain: Ferredoxin C 1, chloroplastic (154 aa).

A chloroplast-targeting transit peptide spans 1–56; sequence MATLPLPTQTSTISLPKPYLSNSFSFPLRNATLSTTTNRRNFLTTGRIIARAYKVV. One can recognise a 2Fe-2S ferredoxin-type domain in the interval 57–142; sequence VEHDGKTTEL…DCHIKMIPEE (86 aa). The [2Fe-2S] cluster site is built by C89, C94, C97, and C126.

The protein belongs to the 2Fe2S plant-type ferredoxin family. [2Fe-2S] cluster is required as a cofactor.

The protein localises to the plastid. Its subcellular location is the chloroplast. Ferredoxins are iron-sulfur proteins that transfer electrons in a wide variety of metabolic reactions. Mediates alternative electron partitioning in conditions of acceptor limitation at photosystem I. Accepts electrons from photosystem I (PSI) and is capable of electron transfer with FNR, but cannot support photoreduction of NADP(+). In Arabidopsis thaliana (Mouse-ear cress), this protein is Ferredoxin C 1, chloroplastic.